Consider the following 583-residue polypeptide: Ribonuclease ZC3H12A (583 aa).

Residues 1 to 11 (MSLWELEDRRS) show a composition bias toward basic and acidic residues. Disordered stretches follow at residues 1 to 29 (MSLW…EATT) and 73 to 119 (GSAA…GSDL). Low complexity predominate over residues 15–29 (TPRPAQEPTAEEATT). Residues 26-71 (EATTAELQMKVDFFRKLGYSSAEIHSVLQKLGIQADTNTVLGELVK) form a ubiquitin association domain region. Positions 65 to 134 (VLGELVKHGS…DGSNVAMSHG (70 aa)) are necessary for interaction with TANK. Basic and acidic residues predominate over residues 73-82 (GSAAERERQA). Serine 83 bears the Phosphoserine mark. Residues 96-281 (GGGTPKAPTV…LDNFLRKKPL (186 aa)) form an RNase region. The 156-residue stretch at 119 to 274 (LRPIVIDGSN…LGRHGPSLDN (156 aa)) folds into the RNase NYN domain. The RNA binding stretch occupies residues 198-204 (RRVGGKR). Mg(2+) is bound at residue aspartate 210. 2 disordered regions span residues 262–290 (DDPL…KQPC) and 323–404 (ANAL…PSEW). Residues 284–309 (EHKKQPCPYGRKCTYGIKCRFLHPER) form a C3H1-type zinc finger. Positions 285–441 (HKKQPCPYGR…SELWGVRGGG (157 aa)) are necessary for interaction with ZC3H12D. The span at 341 to 352 (RPSPSSQPGSLP) shows a compositional bias: low complexity. The span at 353-364 (TEHEQCSPDRKK) shows a compositional bias: basic and acidic residues. Over residues 384–393 (PTGRSLPPSG) the composition is skewed to low complexity. Phosphoserine occurs at positions 422 and 426. A disordered region spans residues 503–530 (YQLPPPTQRLQEPQAPGPGADRGPWGGA).

This sequence belongs to the ZC3H12 family. In terms of assembly, oligomer. Found in a deubiquitination complex with TANK, USP10 and ZC3H12A; this complex inhibits genotoxic stress- or interleukin-1-beta-mediated NF-kappaB activation by promoting IKBKG or TRAF6 deubiquitination. Interacts with IKBKG; this interaction increases in response to DNA damage. Interacts with TANK; this interaction increases in response to DNA damage and serves as a bridge to anchor both TANK and USP10 into a deubiquitinating complex. Interacts with TRAF6; this interaction increases in response to DNA damage and is stimulated by TANK. Interacts with USP10; this interaction increases in response to DNA damage and serves as a bridge to anchor both TANK and USP10 into a deubiquitinating complex. Interacts with ZC3H12D. Interacts with TNRC6A. Interacts with IKBKB/IKKB. Interacts with IKBKB/IKKB. Interacts with BTRC; the interaction occurs when ZC3H12A is phosphorylated in a IKBKB/IKKB-dependent manner. Interacts with IRAK1; this interaction increases the interaction between ZC3H12A and IKBKB/IKKB. Interacts with UPF1; this interaction occurs in a mRNA translationally active- and termination-dependent manner and is essential for ZC3H12A-mediated degradation of target mRNAs. Associates with ribosomes. Interacts with ubiquitin. Mg(2+) is required as a cofactor. Phosphorylated by IRAK1; phosphorylation is necessary for subsequent phosphorylation by the I-kappa-B-kinase (IKK) complex. Phosphorylated by I-kappa-B-kinase (IKK) subunits IKBKB/IKKB and CHUK/IKKA at Ser-422 and Ser-426; these phosphorylations promote ubiquitin proteasome-mediated degradation of ZC3H12A and hence facilitates rapid and robust production of IL-6 mRNA in response to toll-like receptor (TLR) or IL-1 receptor stimuli. In terms of processing, ubiquitinated; ubiquitination is induced in response to interleukin IL1 receptor stimuli in a IKBKB/IKKB and IRAK1-dependent manner, leading to proteasome-mediated degradation. Post-translationally, proteolytically cleaved between Arg-95 and Arg-198 by MALT1 in activated T-cells; cleavage at Arg-95 is critical for promoting ZC3H12A degradation in response to T-cell receptor (TCR) stimulation, and hence is necessary for prolonging the stability of a set of mRNAs controlling T-cell activation and Th17 cell differentiation.

Its subcellular location is the nucleus. The protein localises to the cytoplasm. It is found in the P-body. The protein resides in the rough endoplasmic reticulum membrane. It localises to the cytoplasmic granule. In terms of biological role, endoribonuclease involved in various biological functions such as cellular inflammatory response and immune homeostasis, glial differentiation of neuroprogenitor cells, cell death of cardiomyocytes, adipogenesis and angiogenesis. Functions as an endoribonuclease involved in mRNA decay. Modulates the inflammatory response by promoting the degradation of a set of translationally active cytokine-induced inflammation-related mRNAs, such as IL6 and IL12B, during the early phase of inflammation. Prevents aberrant T-cell-mediated immune reaction by degradation of multiple mRNAs controlling T-cell activation, such as those encoding cytokines (IL6 and IL2), cell surface receptors (ICOS, TNFRSF4 and TNFR2) and transcription factor (REL). Inhibits cooperatively with ZC3H12A the differentiation of helper T cells Th17 in lungs. They repress target mRNA encoding the Th17 cell-promoting factors IL6, ICOS, REL, IRF4, NFKBID and NFKBIZ. The cooperation requires RNA-binding by RC3H1 and the nuclease activity of ZC3H12A. Together with RC3H1, destabilizes TNFRSF4/OX40 mRNA by binding to the conserved stem loop structure in its 3'UTR. Self regulates by destabilizing its own mRNA. Cleaves mRNA harboring a stem-loop (SL), often located in their 3'-UTRs, during the early phase of inflammation in a helicase UPF1-dependent manner. Plays a role in the inhibition of microRNAs (miRNAs) biogenesis. Cleaves the terminal loop of a set of precursor miRNAs (pre-miRNAs) important for the regulation of the inflammatory response leading to their degradation, and thus preventing the biosynthesis of mature miRNAs. Also plays a role in promoting angiogenesis in response to inflammatory cytokines by inhibiting the production of antiangiogenic microRNAs via its anti-dicer RNase activity. Affects the overall ubiquitination of cellular proteins. Positively regulates deubiquitinase activity promoting the cleavage at 'Lys-48'- and 'Lys-63'-linked polyubiquitin chains on TNF receptor-associated factors (TRAFs), preventing JNK and NF-kappa-B signaling pathway activation, and hence negatively regulating macrophage-mediated inflammatory response and immune homeostasis. Also induces deubiquitination of the transcription factor HIF1A, probably leading to its stabilization and nuclear import, thereby positively regulating the expression of proangiogenic HIF1A-targeted genes. Involved in a TANK-dependent negative feedback response to attenuate NF-kappaB activation through the deubiquitination of IKBKG or TRAF6 in response to interleukin-1-beta (IL1B) stimulation or upon DNA damage. Prevents stress granules (SGs) formation and promotes macrophage apoptosis under stress conditions, including arsenite-induced oxidative stress, heat shock, and energy deprivation. Plays a role in the regulation of macrophage polarization; promotes IL4-induced polarization of macrophages M1 into anti-inflammatory M2 state. May also act as a transcription factor that regulates the expression of multiple genes involved in inflammatory response, angiogenesis, adipogenesis and apoptosis. Functions as a positive regulator of glial differentiation of neuroprogenitor cells through an amyloid precursor protein (APP)-dependent signaling pathway. Attenuates septic myocardial contractile dysfunction in response to lipopolysaccharide (LPS) by reducing I-kappa-B-kinase (IKK)-mediated NF-kappa-B activation, and hence myocardial pro-inflammatory cytokine production. The sequence is that of Ribonuclease ZC3H12A from Bos taurus (Bovine).